The following is a 363-amino-acid chain: MKTICLIGGKLQGFEAAYLSKKADMKVVVIDKNPQALIRNYADEFHCFDVIKEPEKLLEISKNVDAILPVNENLECIKFLSSVKEEFSCPVLFDFEAYRISRDKKKSKEYFRSIGIPTPQDKPGRPPYFVKPPCESSSVGARIIYDEEELGELEPGMLVEEYVEGEVISLEVIGDGTHFAVVKETLIHIDRTYDCHMVTPLPSDLSFREISYSLAANLPLKGIMDVEAISGPQGLKVIEIDSRFPSQTPTAVYYSSGVNLIELLFRAFGEGVEEVKTLPEDRYCIYEHLMLAENGALIPVGEQVLSMGNDYGKYYEEPGIEIFLCRGEDPVFTLVFWGKDREEAENKKRTGLLILKDRFGAAV.

K10 is a binding site for ATP. L-lysine is bound at residue 11–12 (LQ). Residues D31, 49 to 50 (DV), and 72 to 73 (EN) each bind ATP. E72 is an L-lysine binding site. The region spanning 85 to 269 (EEFSCPVLFD…LIELLFRAFG (185 aa)) is the ATP-grasp domain. Residues K104, K131, S138, and 160 to 163 (EEYV) contribute to the ADP site. D-ornithine-binding positions include 169-171 (SLE) and D225. The Mg(2+) site is built by E227, E239, and D241. E239 is a binding site for ADP. D-ornithine is bound by residues 243-248 (RFPSQT) and E302. L-lysine-binding residues include S246 and E302.

This sequence belongs to the PylC family. Requires Mg(2+) as cofactor.

It carries out the reaction (3R)-3-methyl-D-ornithine + L-lysine + ATP = (3R)-3-methyl-D-ornithyl-N(6)-L-lysine + ADP + phosphate + H(+). Its pathway is amino-acid biosynthesis; L-pyrrolysine biosynthesis. Is required for the biosynthesis of pyrrolysine. Catalyzes the ATP-dependent ligation between (3R)-3-methyl-D-ornithine and L-lysine, leading to (3R)-3-methyl-D-ornithyl-N6-L-lysine. This is 3-methyl-D-ornithine--L-lysine ligase from Methanosarcina acetivorans (strain ATCC 35395 / DSM 2834 / JCM 12185 / C2A).